The chain runs to 3365 residues: Probable serine/threonine-protein kinase roco9 (3365 aa).

Disordered stretches follow at residues 1-177, 397-497, 944-985, 1044-1098, and 1261-1301; these read MTSI…KSSK, ESTE…QPPQ, PIKK…GFLS, IHQQ…NNKI, and QNNL…ISKG. Positions 8–27 are enriched in basic and acidic residues; it reads FDKKSKRSNEDTGEKEETKK. 4 stretches are compositionally biased toward low complexity: residues 51 to 84, 100 to 116, 137 to 169, and 397 to 415; these read LQQLQQQQDDEQQQQQQQFMEGDNNNNNTNSLNT, STNSTSYSSLRSSSTRS, SQTSESSDITSTSTTSPTMSAASSSSSSGTVKT, and ESTEVLTLSLSSSTSTLEP. Residues 243–437 form the Rho-GAP domain; sequence TPLYSLIKRQ…RLPQQSSDDN (195 aa). Polar residues predominate over residues 421-434; the sequence is PLSTSTQRLPQQSS. Composition is skewed to low complexity over residues 435-445, 457-489, 959-974, 1044-1096, and 1262-1301; these read DDNSNNDNNNK, NNDNNNINNDNGEIIPPSIQVTPPTSPQTQPKQ, SSPLSSLRSSKGIPSK, IHQQ…NNNN, and NNLNNNNGNKENSSSSSSSSSSTSTTPSITKKSSGSISKG. The 681-residue stretch at 804-1484 folds into the Myotubularin phosphatase domain; it reads IWDIYSPLIE…DQIILWSSFF (681 aa). LRR repeat units lie at residues 1510 to 1526, 1527 to 1549, 1550 to 1572, 1576 to 1599, 1600 to 1622, 1624 to 1645, 1646 to 1668, 1670 to 1691, 1697 to 1720, 1722 to 1743, 1744 to 1770, 1772 to 1789, 1790 to 1812, 1814 to 1835, 1837 to 1861, and 1863 to 1887; these read SQKLTFLSIDRNLLSYF, STLTKLNLSRNYFNTFPIEIILL, SNLTHLWLQDNRIKSIPSSLLKL, KLKLQEFDLSHNLLESLHKSIYTL, STLTKLVLDNNKLIIIPESISKM, QLKCLSVQNNRLSSFPQALSLC, VGLEELYVQNNQIRELPLGFFKL, SLRMLDLRNNQITKFKCHKLDD, MNEIIHFRMGPNPLQKLSNQMFEM, SLIHLELTGCSLSTVPLKLLDN, LVNLEALYLNQNKLSEISIDFKRLFKL, VLDLSDNQFTNVPIHAML, PSLKKLYLHNNQLYNISFNDFNL, LLSELRLDGNKLTYVSPSIGTK, LSLTLLNLDRNPQITTLPHTLALLK, and LKSLIVNSNIMESPFRELETTDAIL. A compositionally biased stretch (basic and acidic residues) spans 1932-1947; sequence SKEREKEKEKEKEKEK. 4 disordered regions span residues 1932 to 1963, 2190 to 2389, 2507 to 2567, and 2674 to 2704; these read SKEREKEKEKEKEKEKEKKHKNIGYGSKDKDK, NNNN…NNGS, APST…LQTP, and SNQQQQQQQQSSTQHQHQHHHHQQQQQTSIN. Composition is skewed to low complexity over residues 2190–2205, 2216–2389, 2522–2567, and 2676–2688; these read NNNNNNNNNNNNNNNN, SINN…NNGS, NNTS…LQTP, and QQQQQQQQSSTQH. Residues 3008–3269 form the Protein kinase domain; sequence ELDPNPIGEG…KKLEEIELIL (262 aa). Residues 3014–3022 and lysine 3035 contribute to the ATP site; that span reads IGEGGTATV. Catalysis depends on aspartate 3132, which acts as the Proton acceptor. Residues 3311-3333 are compositionally biased toward low complexity; that stretch reads QQQKQQQLQQQKQSPKQLQQQKP. A disordered region spans residues 3311-3365; that stretch reads QQQKQQQLQQQKQSPKQLQQQKPLPTPPKQLSNNDSTPTKPLDDSSDSSSEDSNN. A compositionally biased stretch (acidic residues) spans 3354–3365; it reads DSSDSSSEDSNN.

The protein belongs to the protein kinase superfamily. TKL Ser/Thr protein kinase family. ROCO subfamily.

It catalyses the reaction L-seryl-[protein] + ATP = O-phospho-L-seryl-[protein] + ADP + H(+). The catalysed reaction is L-threonyl-[protein] + ATP = O-phospho-L-threonyl-[protein] + ADP + H(+). This is Probable serine/threonine-protein kinase roco9 (roco9) from Dictyostelium discoideum (Social amoeba).